A 348-amino-acid polypeptide reads, in one-letter code: Phenylalanine--tRNA ligase alpha subunit (348 aa).

Glutamate 262 contributes to the Mg(2+) binding site.

The protein belongs to the class-II aminoacyl-tRNA synthetase family. Phe-tRNA synthetase alpha subunit type 1 subfamily. As to quaternary structure, tetramer of two alpha and two beta subunits. It depends on Mg(2+) as a cofactor.

Its subcellular location is the cytoplasm. It catalyses the reaction tRNA(Phe) + L-phenylalanine + ATP = L-phenylalanyl-tRNA(Phe) + AMP + diphosphate + H(+). The polypeptide is Phenylalanine--tRNA ligase alpha subunit (Streptococcus pneumoniae serotype 2 (strain D39 / NCTC 7466)).